The chain runs to 506 residues: Cytochrome P450 monooxygenase tpcB (506 aa).

C450 is a binding site for heme.

It belongs to the cytochrome P450 family. Heme serves as cofactor.

It functions in the pathway secondary metabolite biosynthesis; terpenoid biosynthesis. Its function is as follows. Cytochrome P450 monooxygenase; part of the gene cluster that mediates the biosynthesis of terpestacin. The bifunctional terpene synthase tpcA converts isopentenyl diphosphate (IPP) and dimethylallyl diphosphate (DMAPP) into the sesterterpene preterpestacin I. The C-terminal prenyltransferase (PT) domain of tpcA catalyzes formation of GFPP, whereas the N-terminal terpene cyclase (TC) domain catalyzes the cyclization of GFPP into preterpestacin I. The cytochrome P450 monooxygenase tpcB then hydroxylates preterpestacin I to yield 24-hydroxypreterpstacin I (renamed as preterpestacin II) whereas the cytochrome P450 monooxygenase tpcC further hydroxylates preterpestacin II to yield 16,17-dihydroxypreterpestacin II (renamed as preterpestacin III). Finally, the FAD-dependent monooxygenase tpcD converts preterpestacin III into terpestacin. The protein is Cytochrome P450 monooxygenase tpcB of Cochliobolus heterostrophus (strain C5 / ATCC 48332 / race O) (Southern corn leaf blight fungus).